We begin with the raw amino-acid sequence, 438 residues long: Gamma-glutamyl phosphate reductase (438 aa).

The protein belongs to the gamma-glutamyl phosphate reductase family.

It localises to the cytoplasm. It catalyses the reaction L-glutamate 5-semialdehyde + phosphate + NADP(+) = L-glutamyl 5-phosphate + NADPH + H(+). It functions in the pathway amino-acid biosynthesis; L-proline biosynthesis; L-glutamate 5-semialdehyde from L-glutamate: step 2/2. Functionally, catalyzes the NADPH-dependent reduction of L-glutamate 5-phosphate into L-glutamate 5-semialdehyde and phosphate. The product spontaneously undergoes cyclization to form 1-pyrroline-5-carboxylate. This chain is Gamma-glutamyl phosphate reductase, found in Prochlorococcus marinus (strain MIT 9303).